The chain runs to 281 residues: Phosphatidylglycerol--prolipoprotein diacylglyceryl transferase (281 aa).

Transmembrane regions (helical) follow at residues Ile11–Phe31, Leu57–Tyr77, and Val89–Val109. Arg140 is a binding site for a 1,2-diacyl-sn-glycero-3-phospho-(1'-sn-glycerol). Helical transmembrane passes span Pro194 to Phe214, Gly222 to Phe242, and Ile255 to Tyr275.

The protein belongs to the Lgt family.

The protein localises to the cell inner membrane. The catalysed reaction is L-cysteinyl-[prolipoprotein] + a 1,2-diacyl-sn-glycero-3-phospho-(1'-sn-glycerol) = an S-1,2-diacyl-sn-glyceryl-L-cysteinyl-[prolipoprotein] + sn-glycerol 1-phosphate + H(+). The protein operates within protein modification; lipoprotein biosynthesis (diacylglyceryl transfer). Catalyzes the transfer of the diacylglyceryl group from phosphatidylglycerol to the sulfhydryl group of the N-terminal cysteine of a prolipoprotein, the first step in the formation of mature lipoproteins. The polypeptide is Phosphatidylglycerol--prolipoprotein diacylglyceryl transferase (Buchnera aphidicola subsp. Acyrthosiphon pisum (strain APS) (Acyrthosiphon pisum symbiotic bacterium)).